Reading from the N-terminus, the 520-residue chain is Sodium-dependent dicarboxylate transporter SdcS (520 aa).

A run of 14 helical transmembrane segments spans residues 30–50 (TGQLIGLILGPLLFLLTLLFF), 55–75 (LPWKGVYVLAITLWIATWWIT), 77–97 (AIPIAATSLLPIVLLPLGHIL), 104–124 (SEYGNDIIFLFLGGFILAIAM), 160–180 (SMFVSNTAAVMIMIPIGLAII), 207–227 (IGYAGTIGGLGTLIGTPPLII), 242–262 (FAKWMIVGIPTVIVLLGITWL), 298–318 (KVVQTIFVLASLLWITREFLL), 323–343 (VTSSVADGTIAIFISILLFII), 362–382 (ELPWGVLILFGGGLALAKGIS), 399–419 (GVSPILIVIVITIFVLFLTEV), 428–448 (MILPILATLSVAVGVHPLLLM), 452–472 (AMAANCAYMLPVGTPPNAIIF), and 491–511 (LISAIIIILVVYYIMPIVLGI).

The protein belongs to the SLC13A/DASS transporter (TC 2.A.47) family. NADC subfamily.

The protein resides in the cell membrane. Mediates the transport of the dicarboxylates fumarate, malate, and succinate across the cytoplasmic membrane via a Na(+)-electrochemical gradient. This Staphylococcus aureus (strain MRSA252) protein is Sodium-dependent dicarboxylate transporter SdcS (sdcS).